The chain runs to 306 residues: Elongation factor Ts (306 aa).

The segment at 81 to 84 (TDFV) is involved in Mg(2+) ion dislocation from EF-Tu.

It belongs to the EF-Ts family.

The protein localises to the cytoplasm. Associates with the EF-Tu.GDP complex and induces the exchange of GDP to GTP. It remains bound to the aminoacyl-tRNA.EF-Tu.GTP complex up to the GTP hydrolysis stage on the ribosome. This Polaromonas naphthalenivorans (strain CJ2) protein is Elongation factor Ts.